A 105-amino-acid chain; its full sequence is uncharacterized protein (105 aa).

Residues 1 to 24 (MYWPCLVITPFTVGESFCLLLSLG) form the signal peptide.

This is an uncharacterized protein from Saccharomyces cerevisiae (strain ATCC 204508 / S288c) (Baker's yeast).